Reading from the N-terminus, the 423-residue chain is Glutamate-1-semialdehyde 2,1-aminomutase (423 aa).

At Lys259 the chain carries N6-(pyridoxal phosphate)lysine.

Belongs to the class-III pyridoxal-phosphate-dependent aminotransferase family. HemL subfamily. Homodimer. Pyridoxal 5'-phosphate serves as cofactor.

It is found in the cytoplasm. It carries out the reaction (S)-4-amino-5-oxopentanoate = 5-aminolevulinate. It functions in the pathway porphyrin-containing compound metabolism; protoporphyrin-IX biosynthesis; 5-aminolevulinate from L-glutamyl-tRNA(Glu): step 2/2. This is Glutamate-1-semialdehyde 2,1-aminomutase from Thermosipho africanus (strain TCF52B).